Here is a 763-residue protein sequence, read N- to C-terminus: Endoplasmic reticulum membrane sensor NFE2L1 (763 aa).

Residues 7 to 24 traverse the membrane as a helical; Signal-anchor for type II membrane protein segment; that stretch reads YLTEGLLQFTILLSLIGV. The interval 108–150 is disordered; sequence DPEGSVSGSQPSSGLALESSSGLQDVTGPDNGVRESETEQGFS. Over residues 116 to 131 the composition is skewed to low complexity; sequence SQPSSGLALESSSGLQ. Residues 180 to 188 form a cholesterol recognition/amino acid consensus (CRAC) region region; sequence IFDYSHRQK. 2 N-linked (GlcNAc...) asparagine glycosylation sites follow: Asn-338 and Asn-350. The tract at residues 369 to 373 is CPD; sequence SPEVE. Residue Asn-413 is glycosylated (N-linked (GlcNAc...) asparagine). Disordered stretches follow at residues 460 to 523 and 585 to 604; these read EEEF…DSET and TLKKGSKEKQADFLDKQMSR. A Destruction motif motif is present at residues 466–470; sequence DSGLS. Over residues 466–514 the composition is skewed to low complexity; sequence DSGLSLDSSHSPSSLSSSEGSSSSSSSSSSSSSSSASSSASSSFSEEGA. Ser-519 bears the Phosphoserine; by CK2 mark. The span at 589-604 shows a compositional bias: basic and acidic residues; the sequence is GSKEKQADFLDKQMSR. Ser-590 carries the phosphoserine; by PKA modification. The 64-residue stretch at 645-708 folds into the bZIP domain; sequence LIRDIRRRGK…RQMKQKVQSL (64 aa). Residues 647–666 form a basic motif region; the sequence is RDIRRRGKNKMAAQNCRKRK. A leucine-zipper region spans residues 673–687; it reads LERDVEDLQRDKARL. The Nuclear localization signal signature appears at 752–759; the sequence is RRQERKPK.

Belongs to the bZIP family. CNC subfamily. In terms of assembly, interacts with KEAP1. As to quaternary structure, interacts (via CPD region) with FBXW7; leading to its ubiquitination and degradation. Interacts with SYVN1/HRD1; leading to its ubiquitination and degradation. Interacts (when ubiquitinated) with DDI2; leading to its cleavage. Interacts (via the bZIP domain) with small MAF protein (MAFF, MAFG or MAFK); required for binding to antioxidant response elements (AREs) on DNA. Interacts (via Destruction motif) with BTRC; leading to its ubiquitination and degradation. Interacts with CEBPB; the heterodimer represses expression of DSPP during odontoblast differentiation. Interacts with MOTS-c, a peptide produced by the mitochondrially encoded 12S rRNA MT-RNR1. In terms of processing, cleaved at Leu-104 by the aspartyl protease DDI2 following retrotranslocation, releasing the protein from the endoplasmic reticulum membrane and forming the transcription factor NRF1 that translocates into the nucleus. Ubiquitination is prerequisite for cleavage by aspartyl protease DDI2. N-glycosylated in normal conditions, when it has a single-pass type II membrane protein topology, with the DNA-binding domain facing the endoplasmic reticulum lumen. Deglycosylated during retrotranslocation to the cytosolic side of the membrane, to have a single-pass type III membrane protein topology with the major part of the protein facing the cytosol. Post-translationally, ubiquitinated by the SCF(FBXW7) complex and SYVN1/HRD1, leading to its degradation by the proteasome. Ubiquitinated during retrotranslocation to the cytosolic side of the membrane: ubiquitination does not lead to degradation and is required for processing by the aspartyl protease DDI2 and subsequent release from the endoplasmic reticulum membrane. In terms of processing, phosphorylation by CK2 at Ser-519 inhibits transcription factor activity, possibly by affecting DNA-binding activity. Phosphorylation at Ser-590 is required for interaction with CEBPB. Ubiquitinated by the SCF(BTRC) complex in the nucleus, leading to its degradation by the proteasome.

The protein localises to the endoplasmic reticulum membrane. The protein resides in the nucleus. Endoplasmic reticulum membrane sensor that translocates into the nucleus in response to various stresses to act as a transcription factor. Constitutes a precursor of the transcription factor NRF1. Able to detect various cellular stresses, such as cholesterol excess, oxidative stress or proteasome inhibition. In response to stress, it is released from the endoplasmic reticulum membrane following cleavage by the protease DDI2 and translocates into the nucleus to form the transcription factor NRF1. Acts as a key sensor of cholesterol excess: in excess cholesterol conditions, the endoplasmic reticulum membrane form of the protein directly binds cholesterol via its CRAC motif, preventing cleavage and release of the transcription factor NRF1, thereby allowing expression of genes promoting cholesterol removal, such as CD36. Involved in proteasome homeostasis: in response to proteasome inhibition, it is released from the endoplasmic reticulum membrane, translocates to the nucleus and activates expression of genes encoding proteasome subunits. In terms of biological role, CNC-type bZIP family transcription factor that translocates to the nucleus and regulates expression of target genes in response to various stresses. Heterodimerizes with small-Maf proteins (MAFF, MAFG or MAFK) and binds DNA motifs including the antioxidant response elements (AREs), which regulate expression of genes involved in oxidative stress response. Activates or represses expression of target genes, depending on the context. Plays a key role in cholesterol homeostasis by acting as a sensor of cholesterol excess: in low cholesterol conditions, translocates into the nucleus and represses expression of genes involved in defense against cholesterol excess, such as CD36. In excess cholesterol conditions, the endoplasmic reticulum membrane form of the protein directly binds cholesterol via its CRAC motif, preventing cleavage and release of the transcription factor NRF1, thereby allowing expression of genes promoting cholesterol removal. Critical for redox balance in response to oxidative stress: acts by binding the AREs motifs on promoters and mediating activation of oxidative stress response genes, such as GCLC, GCLM, GSS, MT1 and MT2. Plays an essential role during fetal liver hematopoiesis: probably has a protective function against oxidative stress and is involved in lipid homeostasis in the liver. Involved in proteasome homeostasis: in response to proteasome inhibition, mediates the 'bounce-back' of proteasome subunits by translocating into the nucleus and activating expression of genes encoding proteasome subunits. Also involved in regulating glucose flux. Together with CEBPB; represses expression of DSPP during odontoblast differentiation. In response to ascorbic acid induction, activates expression of SP7/Osterix in osteoblasts. The protein is Endoplasmic reticulum membrane sensor NFE2L1 of Bos taurus (Bovine).